The chain runs to 166 residues: MQTHIKINRGELLRGIEQDHTRQLPDFRPGDTVRVDTKVREGNRTRSQAFEGVVIAINGSGSRKSFTVRKISFGEGVERVFPFASPLVNQVTIVERGKVRRAKLYYLRELRGKAARIKSDRSRVMKDAARAQQDKANASASQAAAAQADVTVISAAPEVAPETQGE.

It belongs to the bacterial ribosomal protein bL19 family. In terms of assembly, part of the 50S ribosomal subunit. Forms a cluster with proteins L3 and L14.

Its function is as follows. This protein is located at the 30S-50S ribosomal subunit interface and may play a role in the structure and function of the aminoacyl-tRNA binding site. Binds the 23S rRNA. The chain is Large ribosomal subunit protein bL19 (rplS) from Deinococcus radiodurans (strain ATCC 13939 / DSM 20539 / JCM 16871 / CCUG 27074 / LMG 4051 / NBRC 15346 / NCIMB 9279 / VKM B-1422 / R1).